The chain runs to 468 residues: UDP-N-acetylmuramate--L-alanine ligase (468 aa).

Residue 114–120 (GTHGKTT) coordinates ATP.

This sequence belongs to the MurCDEF family.

It localises to the cytoplasm. It carries out the reaction UDP-N-acetyl-alpha-D-muramate + L-alanine + ATP = UDP-N-acetyl-alpha-D-muramoyl-L-alanine + ADP + phosphate + H(+). It participates in cell wall biogenesis; peptidoglycan biosynthesis. Its function is as follows. Cell wall formation. This is UDP-N-acetylmuramate--L-alanine ligase from Brucella anthropi (strain ATCC 49188 / DSM 6882 / CCUG 24695 / JCM 21032 / LMG 3331 / NBRC 15819 / NCTC 12168 / Alc 37) (Ochrobactrum anthropi).